The following is a 455-amino-acid chain: Glycylpeptide N-tetradecanoyltransferase (455 aa).

Position 38–41 (38–41) interacts with tetradecanoyl-CoA; sequence HKFW. The segment at 168-204 is myristoyl CoA-binding; sequence INFLCVHKQLRSKRLTPVLIKEITRRVNKCDIWHALY. Leu-455 (proton acceptor; via carboxylate) is an active-site residue.

It belongs to the NMT family. As to quaternary structure, monomer. The N-terminus is blocked.

Its subcellular location is the cytoplasm. It catalyses the reaction N-terminal glycyl-[protein] + tetradecanoyl-CoA = N-tetradecanoylglycyl-[protein] + CoA + H(+). With respect to regulation, inhibited by diethylpyrocarbonate. Competitively inhibited by S-(2-oxo)pentadecyl-CoA, a non hydrolysable myristoyl-CoA analog, and by SC-58272, a peptidomimetic derived from the N-terminal sequence of a natural substrate. Functionally, adds a myristoyl group to the N-terminal glycine residue of certain cellular proteins. Substrate specificity requires an N-terminal glycine in the nascent polypeptide substrates. Uncharged amino acids are preferred at position 2 while neutral residues are favored at positions 3 and 4. Ser is present at position 5 in almost all known N-myristoyl proteins and Lys is commonly encountered at postion 6. This is Glycylpeptide N-tetradecanoyltransferase (NMT1) from Saccharomyces cerevisiae (strain ATCC 204508 / S288c) (Baker's yeast).